Here is a 255-residue protein sequence, read N- to C-terminus: 7alpha-hydroxysteroid dehydrogenase (255 aa).

NAD(+) contacts are provided by residues I23, 42–43, 68–69, and N95; these read DI. Residues G99, S146, N151, and Y159 each coordinate glycochenodeoxycholate. Residues Y159, K163, and 192–194 contribute to the NAD(+) site; that span reads ILT. Y159 (proton acceptor) is an active-site residue.

The protein belongs to the short-chain dehydrogenases/reductases (SDR) family. As to quaternary structure, homotetramer.

It carries out the reaction cholate + NAD(+) = 3alpha,12alpha-dihydroxy-7-oxo-5beta-cholanate + NADH + H(+). The catalysed reaction is chenodeoxycholate + NAD(+) = 7-oxolithocholate + NADH + H(+). It catalyses the reaction taurochenodeoxycholate + NAD(+) = 7-oxotaurolithocholate + NADH + H(+). The enzyme catalyses taurocholate + NAD(+) = 7-oxo-taurodeoxycholate + NADH + H(+). It carries out the reaction glycocholate + NAD(+) = 7-oxo-glycodeoxycholate + NADH + H(+). The catalysed reaction is glycochenodeoxycholate + NAD(+) = 7-oxoglycolithocholate + NADH + H(+). In terms of biological role, 7alpha-hydroxysteroid dehydrogenase involved in the metabolism of bile acids. Catalyzes the NAD(+)-dependent oxidation of the 7alpha-hydroxy group of 7alpha-hydroxysteroids, such as the major human bile acids cholate and chenodeoxycholate, to the corresponding 7-oxosteroids. To a lesser extent, can also act on taurochenodeoxycholate, taurocholate and glycocholate. Can also use glycochenodeoxycholate as substrate. Is not able to use NADP(+) instead of NAD(+) as the electron acceptor. The chain is 7alpha-hydroxysteroid dehydrogenase (hdhA) from Escherichia coli O157:H7.